The sequence spans 426 residues: Glutamate-1-semialdehyde 2,1-aminomutase (426 aa).

The residue at position 265 (lysine 265) is an N6-(pyridoxal phosphate)lysine.

This sequence belongs to the class-III pyridoxal-phosphate-dependent aminotransferase family. HemL subfamily. As to quaternary structure, homodimer. It depends on pyridoxal 5'-phosphate as a cofactor.

Its subcellular location is the cytoplasm. The enzyme catalyses (S)-4-amino-5-oxopentanoate = 5-aminolevulinate. Its pathway is porphyrin-containing compound metabolism; protoporphyrin-IX biosynthesis; 5-aminolevulinate from L-glutamyl-tRNA(Glu): step 2/2. This Pectobacterium atrosepticum (strain SCRI 1043 / ATCC BAA-672) (Erwinia carotovora subsp. atroseptica) protein is Glutamate-1-semialdehyde 2,1-aminomutase.